The following is an 862-amino-acid chain: C-type lectin domain-containing protein 161 (862 aa).

A signal peptide spans 1–20 (MYRRTTLWFLLLFQPILVFA). Asparagine 22 and asparagine 91 each carry an N-linked (GlcNAc...) asparagine glycan. The C-type lectin 1 domain maps to 41–154 (SLNACFKLYN…VGQKLPFVCT (114 aa)). Cysteine 62 and cysteine 153 are joined by a disulfide. Residues 162–291 (AGPAPVHAMR…SDESSDEAYD (130 aa)) are disordered. The span at 198–218 (SDKKEKKEVASDKKKESKKDE) shows a compositional bias: basic and acidic residues. An N-linked (GlcNAc...) asparagine glycan is attached at asparagine 222. Residues 242 to 252 (SDKKESSKKDE) are compositionally biased toward basic and acidic residues. Asparagine 258, asparagine 279, and asparagine 352 each carry an N-linked (GlcNAc...) asparagine glycan. Residues 265 to 283 (ANAEMSASISASSANSSSD) are compositionally biased toward low complexity. Disordered regions lie at residues 377 to 437 (MTMR…SASL), 450 to 469 (ALAS…QKSA), and 474 to 504 (AVVS…IDES). The span at 388–418 (SSSNTDSESASISESSQASEQAVMAAAMSAK) shows a compositional bias: low complexity. Composition is skewed to basic and acidic residues over residues 455–467 (SKSD…KDQK) and 478–491 (ENKH…DPKS). N-linked (GlcNAc...) asparagine glycosylation is present at asparagine 559. 2 consecutive C-type lectin domains span residues 562 to 687 (APAL…SVLC) and 716 to 828 (KNGK…FVSV). Cysteine 653 and cysteine 678 are disulfide-bonded. A glycan (N-linked (GlcNAc...) asparagine) is linked at asparagine 765. A disulfide bridge connects residues cysteine 807 and cysteine 819. Asparagine 831 and asparagine 857 each carry an N-linked (GlcNAc...) asparagine glycan.

The protein resides in the secreted. The protein is C-type lectin domain-containing protein 161 (clec-161) of Caenorhabditis elegans.